A 129-amino-acid chain; its full sequence is Small ribosomal subunit protein uS11 (129 aa).

Belongs to the universal ribosomal protein uS11 family. Part of the 30S ribosomal subunit. Interacts with proteins S7 and S18. Binds to IF-3.

Located on the platform of the 30S subunit, it bridges several disparate RNA helices of the 16S rRNA. Forms part of the Shine-Dalgarno cleft in the 70S ribosome. This is Small ribosomal subunit protein uS11 from Caulobacter sp. (strain K31).